Consider the following 352-residue polypeptide: DNA integrity scanning protein DisA (352 aa).

The DAC domain occupies 3–143 (PQELIEKIKL…NYKYVVNQVD (141 aa)). ATP-binding positions include Gly71, Leu89, and 102–106 (TRHRT).

It belongs to the DisA family. Homooctamer. The cofactor is Mg(2+).

It catalyses the reaction 2 ATP = 3',3'-c-di-AMP + 2 diphosphate. Functionally, participates in a DNA-damage check-point. DisA forms globular foci that rapidly scan along the chromosomes searching for lesions. In terms of biological role, also has diadenylate cyclase activity, catalyzing the condensation of 2 ATP molecules into cyclic di-AMP (c-di-AMP). c-di-AMP likely acts as a signaling molecule that may couple DNA integrity with a cellular process. The sequence is that of DNA integrity scanning protein DisA from Thermotoga neapolitana (strain ATCC 49049 / DSM 4359 / NBRC 107923 / NS-E).